A 429-amino-acid polypeptide reads, in one-letter code: Histidine--tRNA ligase (429 aa).

Belongs to the class-II aminoacyl-tRNA synthetase family. In terms of assembly, homodimer.

It is found in the cytoplasm. It catalyses the reaction tRNA(His) + L-histidine + ATP = L-histidyl-tRNA(His) + AMP + diphosphate + H(+). This chain is Histidine--tRNA ligase, found in Corynebacterium efficiens (strain DSM 44549 / YS-314 / AJ 12310 / JCM 11189 / NBRC 100395).